The chain runs to 212 residues: Ribonuclease HII (212 aa).

The RNase H type-2 domain maps to 22 to 211 (GLVAGVDEVG…VADRILLQNT (190 aa)). Aspartate 28, glutamate 29, and aspartate 120 together coordinate a divalent metal cation.

The protein belongs to the RNase HII family. Requires Mn(2+) as cofactor. Mg(2+) serves as cofactor.

It is found in the cytoplasm. The enzyme catalyses Endonucleolytic cleavage to 5'-phosphomonoester.. In terms of biological role, endonuclease that specifically degrades the RNA of RNA-DNA hybrids. This is Ribonuclease HII from Shewanella frigidimarina (strain NCIMB 400).